Consider the following 271-residue polypeptide: Phosphonates import ATP-binding protein PhnC 2 (271 aa).

One can recognise an ABC transporter domain in the interval 2 to 245 (LVVEGLTCRF…IARELYDLEA (244 aa)). 34 to 41 (GRSGAGKS) lines the ATP pocket.

This sequence belongs to the ABC transporter superfamily. Phosphonates importer (TC 3.A.1.9.1) family. The complex is composed of two ATP-binding proteins (PhnC), two transmembrane proteins (PhnE) and a solute-binding protein (PhnD).

The protein localises to the cell inner membrane. It catalyses the reaction phosphonate(out) + ATP + H2O = phosphonate(in) + ADP + phosphate + H(+). Functionally, part of the ABC transporter complex PhnCDE involved in phosphonates import. Responsible for energy coupling to the transport system. The chain is Phosphonates import ATP-binding protein PhnC 2 from Rhodopseudomonas palustris (strain BisB18).